Here is a 1276-residue protein sequence, read N- to C-terminus: Sterol regulatory element-binding protein cleavage-activating protein (1276 aa).

Over 1-18 (MTLTERLREKISQAFYNH) the chain is Cytoplasmic. A helical transmembrane segment spans residues 19–39 (GLLCASYPIPIILFTGLCILA). At 40–279 (CCYPLLKLPL…NLVHVHFKEE (240 aa)) the chain is on the lumenal side. A loop-1 region spans residues 46-284 (KLPLPGTGPV…HFKEEIGIAE (239 aa)). The tract at residues 60–81 (PVKDYSPPPVDSDHKQGEPSEQ) is disordered. Asn-263 carries an N-linked (GlcNAc...) asparagine glycan. The chain crosses the membrane as a helical span at residues 280 to 300 (IGIAELIPLVTTYIILFAYIY). One can recognise an SSD domain in the interval 284-442 (ELIPLVTTYI…MFFFTTVLSI (159 aa)). Residues 301–312 (FSTRKIDMVKSK) are Cytoplasmic-facing. A helical membrane pass occupies residues 313–333 (WGLALAAVVTVLSSLLMSVGL). The Lumenal segment spans residues 334-344 (CTLFGLTPTLN). The helical transmembrane segment at 345-365 (GGEIFPYLVVVIGLENVLVLT) threads the bilayer. At 366–401 (KSVVSTPVDLEVKLRIAQGLSSESWSIMKNVATELG) the chain is on the cytoplasmic side. The chain crosses the membrane as a helical span at residues 402–422 (IILIGYFTLVPAIQEFCLFAV). A topological domain (lumenal) is located at residue Val-423. A helical transmembrane segment spans residues 424–444 (GLVSDFFLQMFFFTTVLSIDI). The Cytoplasmic portion of the chain corresponds to 445–518 (RRMELADLNK…FLARTRLAQR (74 aa)). Residues 447 to 452 (MELADL) carry the ER export signal motif. Glycyl lysine isopeptide (Lys-Gly) (interchain with G-Cter in ubiquitin) cross-links involve residues Lys-454 and Lys-466. A helical transmembrane segment spans residues 519–539 (LIMAGTVVWIGILVYTDPAGL). Positions 535–710 (DPAGLRTYLA…QAHGDITLYK (176 aa)) are loop-7. The Lumenal portion of the chain corresponds to 540 to 708 (RTYLAAQVTE…GTQAHGDITL (169 aa)). N-linked (GlcNAc...) asparagine glycans are attached at residues Asn-590 and Asn-641. The helical transmembrane segment at 709–729 (YKVAALGLAAGIVLVLLLLCL) threads the bilayer. Over 730 to 1276 (YRVLCPRNYG…YVPSVLEKLD (547 aa)) the chain is Cytoplasmic. An interaction with SREBF2 region spans residues 731 to 1276 (RVLCPRNYGQ…YVPSVLEKLD (546 aa)). One copy of the WD 1 repeat lies at 771–811 (VLRGHLMDIECLASDGMLLVSCCLAGQVCVWDAQTGDCLTR). The tract at residues 816-903 (GSRRDSCGGG…RHRAGCGRAR (88 aa)) is disordered. Ser-821, Ser-837, Ser-843, Ser-850, Ser-905, and Ser-934 each carry phosphoserine. The tract at residues 928–957 (PALRPPSPGSPLPQASQEDGAAPEKGSPPL) is disordered. 2 WD repeats span residues 949–999 (APEK…LCCS) and 1002–1039 (EVSS…SLSP). Arg-1048 bears the Omega-N-methylarginine mark. 4 WD repeats span residues 1074–1111 (AHQK…CLFT), 1114–1152 (GHSG…RVSH), 1155–1192 (AHRG…KLYS), and 1194–1232 (QQDL…LLQT).

It belongs to the WD repeat SCAP family. Membrane region forms a homotetramer. Component of the SCAP-SREBP complex (composed of SCAP and SREBF1/SREBP1 or SREBF2/SREBP2); interacts with SREBF1/SREBP1 or SREBF2/SREBP2 through its C-terminal cytoplasmic domain. Forms a ternary complex with INSIG1 or INSIG2 through its transmembrane domains at high sterol concentrations. Interacts with PAQR3; the interaction anchors the SCAP-SREBP complex to the Golgi apparatus in low cholesterol conditions. Interacts with the SEC23-SEC24 complex in a SAR1-GTP-dependent manner through an ER export signal in its third cytoplasmic loop. Interacts with RNF139; the interaction inhibits the interaction of SCAP with SEC24B and hampering the ER to Golgi transport of the SCAP-SREBP complex. Interacts with SPRING. Post-translationally, ubiquitinated at Lys-454 and Lys-466. RNF145 triggers ubiquitination of SCAP, likely inhibiting SCAP-SREBP complex transport to the Golgi apparatus and the subsequent processing/maturation of SREBF2/SREBP2.

The protein localises to the endoplasmic reticulum membrane. Its subcellular location is the golgi apparatus membrane. It localises to the cytoplasmic vesicle. It is found in the COPII-coated vesicle membrane. Escort protein required for cholesterol as well as lipid homeostasis. Regulates export of the SCAP-SREBP complex from the endoplasmic reticulum to the Golgi upon low cholesterol, thereby regulating the processing of sterol regulatory element-binding proteins (SREBPs) SREBF1/SREBP1 and SREBF2/SREBP2. At high sterol concentrations, formation of a ternary complex with INSIG (INSIG1 or INSIG2) leads to mask the ER export signal in SCAP, promoting retention of the complex in the endoplasmic reticulum. Low sterol concentrations trigger release of INSIG, a conformational change in the SSD domain of SCAP, unmasking of the ER export signal, promoting recruitment into COPII-coated vesicles and transport of the SCAP-SREBP to the Golgi: in the Golgi, SREBPs are then processed, releasing the transcription factor fragment of SREBPs from the membrane, its import into the nucleus and up-regulation of LDLR, INSIG1 and the mevalonate pathway. Binds cholesterol via its SSD domain. The polypeptide is Sterol regulatory element-binding protein cleavage-activating protein (Cricetulus griseus (Chinese hamster)).